A 633-amino-acid polypeptide reads, in one-letter code: Carbon monoxide dehydrogenase 2 (633 aa).

5 residues coordinate [4Fe-4S] cluster: Cys44, Cys53, Cys56, Cys61, and Cys73. Residues His264, Cys343, Cys453, Cys484, and Cys525 each contribute to the [Ni-4Fe-5S] cluster site.

The protein belongs to the Ni-containing carbon monoxide dehydrogenase family. In terms of assembly, homodimer. Requires [4Fe-4S] cluster as cofactor. [Ni-4Fe-5S] cluster serves as cofactor.

The catalysed reaction is CO + 2 oxidized [2Fe-2S]-[ferredoxin] + H2O = 2 reduced [2Fe-2S]-[ferredoxin] + CO2 + 2 H(+). Functionally, CODH oxidizes carbon monoxide coupled, via CooF, to the reduction of a hydrogen cation by a hydrogenase (possibly CooH). The sequence is that of Carbon monoxide dehydrogenase 2 (cooS2) from Methanosarcina acetivorans (strain ATCC 35395 / DSM 2834 / JCM 12185 / C2A).